Reading from the N-terminus, the 84-residue chain is Small ribosomal subunit protein uS15 (84 aa).

The protein belongs to the universal ribosomal protein uS15 family. As to quaternary structure, part of the 30S ribosomal subunit. Forms a bridge to the 50S subunit in the 70S ribosome, contacting the 23S rRNA.

Its function is as follows. One of the primary rRNA binding proteins, it binds directly to 16S rRNA where it helps nucleate assembly of the platform of the 30S subunit by binding and bridging several RNA helices of the 16S rRNA. Functionally, forms an intersubunit bridge (bridge B4) with the 23S rRNA of the 50S subunit in the ribosome. This is Small ribosomal subunit protein uS15 from Akkermansia muciniphila (strain ATCC BAA-835 / DSM 22959 / JCM 33894 / BCRC 81048 / CCUG 64013 / CIP 107961 / Muc).